The sequence spans 289 residues: 4-diphosphocytidyl-2-C-methyl-D-erythritol kinase (289 aa).

Lys10 is a catalytic residue. 94–104 (PVAAGLAGGSS) serves as a coordination point for ATP. Asp136 is a catalytic residue.

This sequence belongs to the GHMP kinase family. IspE subfamily.

The catalysed reaction is 4-CDP-2-C-methyl-D-erythritol + ATP = 4-CDP-2-C-methyl-D-erythritol 2-phosphate + ADP + H(+). It participates in isoprenoid biosynthesis; isopentenyl diphosphate biosynthesis via DXP pathway; isopentenyl diphosphate from 1-deoxy-D-xylulose 5-phosphate: step 3/6. In terms of biological role, catalyzes the phosphorylation of the position 2 hydroxy group of 4-diphosphocytidyl-2C-methyl-D-erythritol. In Bacillus licheniformis (strain ATCC 14580 / DSM 13 / JCM 2505 / CCUG 7422 / NBRC 12200 / NCIMB 9375 / NCTC 10341 / NRRL NRS-1264 / Gibson 46), this protein is 4-diphosphocytidyl-2-C-methyl-D-erythritol kinase.